A 183-amino-acid polypeptide reads, in one-letter code: MVVGIEGIITKKEPTFIIVKCASGLSYGIFISLFCSAKIQTQEKHEFFITQIIKEDSNKFYGFLDKDEQKMFEMLLKVNGVGANTAMAVCSSLDVNSFYKALSLGDESVLKKVPGIGPKSAKRIIVELSDTKTKLENVSDDKSEALAALLTLGFKQEKIISVLASAQATGTSELIKEALKKLG.

The tract at residues 1 to 64 (MVVGIEGIIT…EDSNKFYGFL (64 aa)) is domain I. Residues 65 to 139 (DKDEQKMFEM…DTKTKLENVS (75 aa)) are domain II. Position 139 (serine 139) is a region of interest, flexible linker. Residues 139–183 (SDDKSEALAALLTLGFKQEKIISVLASAQATGTSELIKEALKKLG) are domain III.

It belongs to the RuvA family. As to quaternary structure, homotetramer. Forms an RuvA(8)-RuvB(12)-Holliday junction (HJ) complex. HJ DNA is sandwiched between 2 RuvA tetramers; dsDNA enters through RuvA and exits via RuvB. An RuvB hexamer assembles on each DNA strand where it exits the tetramer. Each RuvB hexamer is contacted by two RuvA subunits (via domain III) on 2 adjacent RuvB subunits; this complex drives branch migration. In the full resolvosome a probable DNA-RuvA(4)-RuvB(12)-RuvC(2) complex forms which resolves the HJ.

Its subcellular location is the cytoplasm. In terms of biological role, the RuvA-RuvB-RuvC complex processes Holliday junction (HJ) DNA during genetic recombination and DNA repair, while the RuvA-RuvB complex plays an important role in the rescue of blocked DNA replication forks via replication fork reversal (RFR). RuvA specifically binds to HJ cruciform DNA, conferring on it an open structure. The RuvB hexamer acts as an ATP-dependent pump, pulling dsDNA into and through the RuvAB complex. HJ branch migration allows RuvC to scan DNA until it finds its consensus sequence, where it cleaves and resolves the cruciform DNA. This Campylobacter jejuni subsp. jejuni serotype O:23/36 (strain 81-176) protein is Holliday junction branch migration complex subunit RuvA.